The chain runs to 540 residues: tRNA-2-methylthio-N(6)-dimethylallyladenosine synthase (540 aa).

The MTTase N-terminal domain maps to 41 to 157 (RTYEVRTFGC…LPTLLERSAH (117 aa)). Cys-50, Cys-86, Cys-120, Cys-194, Cys-198, and Cys-201 together coordinate [4Fe-4S] cluster. The 237-residue stretch at 180-416 (RESAYSGWVS…IALQERIQAE (237 aa)) folds into the Radical SAM core domain. Residues 419-486 (KELVGTTQEL…PFFLIADGPL (68 aa)) form the TRAM domain.

Belongs to the methylthiotransferase family. MiaB subfamily. As to quaternary structure, monomer. [4Fe-4S] cluster is required as a cofactor.

The protein resides in the cytoplasm. It catalyses the reaction N(6)-dimethylallyladenosine(37) in tRNA + (sulfur carrier)-SH + AH2 + 2 S-adenosyl-L-methionine = 2-methylsulfanyl-N(6)-dimethylallyladenosine(37) in tRNA + (sulfur carrier)-H + 5'-deoxyadenosine + L-methionine + A + S-adenosyl-L-homocysteine + 2 H(+). Catalyzes the methylthiolation of N6-(dimethylallyl)adenosine (i(6)A), leading to the formation of 2-methylthio-N6-(dimethylallyl)adenosine (ms(2)i(6)A) at position 37 in tRNAs that read codons beginning with uridine. This Corynebacterium urealyticum (strain ATCC 43042 / DSM 7109) protein is tRNA-2-methylthio-N(6)-dimethylallyladenosine synthase.